The chain runs to 433 residues: Putative ankyrin repeat protein R578 (433 aa).

ANK repeat units lie at residues 166 to 195 (NKEIILRNAVITNNLEMLEFAIEKGAILSE), 197 to 224 (DHLIVQSIRTSNLDLIKYIFSHIDLSKL), 356 to 386 (VNPNILKTSIYCCNNFDITKYLIDNGADIHS), and 388 to 415 (PSLIKTAITSGNLKTATFLMDNGAICDE).

This Acanthamoeba polyphaga mimivirus (APMV) protein is Putative ankyrin repeat protein R578.